The following is a 106-amino-acid chain: MMATGTADSQARFGQSVKGLLTEKVTTCGTDVIALTKQVLKGSRSSELLGQAARNMVLQEDAILHSEDSLRKMAIITTHLQYQQEAIQKNVEQSSDLQDQLNHLLK.

The protein belongs to the BORCS7 family. As to quaternary structure, component of the BLOC-one-related complex (BORC) which is composed of BLOC1S1, BLOC1S2, BORCS5, BORCS6, BORCS7, BORCS8, KXD1 and SNAPIN.

The protein resides in the lysosome membrane. Functionally, as part of the BORC complex may play a role in lysosomes movement and localization at the cell periphery. Associated with the cytosolic face of lysosomes, the BORC complex may recruit ARL8B and couple lysosomes to microtubule plus-end-directed kinesin motor. The polypeptide is BLOC-1-related complex subunit 7 (Pongo abelii (Sumatran orangutan)).